We begin with the raw amino-acid sequence, 400 residues long: Acetate kinase (400 aa).

Asparagine 10 contributes to the Mg(2+) binding site. Lysine 17 serves as a coordination point for ATP. Arginine 91 serves as a coordination point for substrate. Aspartate 150 serves as the catalytic Proton donor/acceptor. ATP-binding positions include 210–214, 285–287, and 333–337; these read HLGNG, DCR, and GIGEN. Glutamate 387 is a binding site for Mg(2+).

The protein belongs to the acetokinase family. Homodimer. Mg(2+) serves as cofactor. It depends on Mn(2+) as a cofactor.

The protein localises to the cytoplasm. The catalysed reaction is acetate + ATP = acetyl phosphate + ADP. It functions in the pathway metabolic intermediate biosynthesis; acetyl-CoA biosynthesis; acetyl-CoA from acetate: step 1/2. Catalyzes the formation of acetyl phosphate from acetate and ATP. Can also catalyze the reverse reaction. In Yersinia pseudotuberculosis serotype IB (strain PB1/+), this protein is Acetate kinase.